A 372-amino-acid chain; its full sequence is GDP-mannose 4,6-dehydratase (372 aa).

Residues 9-14, 64-65, 86-90, and tyrosine 101 contribute to the NADP(+) site; these read GVTGQD, DL, and LGAQS. The active site involves threonine 133. Residues glutamate 135 and tyrosine 157 each act as nucleophile in the active site. NADP(+) contacts are provided by lysine 161, histidine 187, and arginine 192.

The protein belongs to the NAD(P)-dependent epimerase/dehydratase family. GDP-mannose 4,6-dehydratase subfamily. Requires NADP(+) as cofactor.

The catalysed reaction is GDP-alpha-D-mannose = GDP-4-dehydro-alpha-D-rhamnose + H2O. The protein operates within nucleotide-sugar biosynthesis; GDP-L-fucose biosynthesis via de novo pathway; GDP-L-fucose from GDP-alpha-D-mannose: step 1/2. Catalyzes the conversion of GDP-D-mannose to GDP-4-dehydro-6-deoxy-D-mannose. The chain is GDP-mannose 4,6-dehydratase from Vibrio cholerae.